The following is a 182-amino-acid chain: uncharacterized protein (182 aa).

The protein to M.tuberculosis Rv2313c.

This is an uncharacterized protein from Escherichia coli (strain K12).